The primary structure comprises 314 residues: Mitochondrial 2-oxoglutarate/malate carrier protein (314 aa).

The residue at position 2 (A2) is an N-acetylalanine. Phosphoserine is present on S6. 3 Solcar repeats span residues 23 to 108 (VKFL…LFER), 117 to 208 (PGFL…SKQF), and 217 to 306 (DNIL…MNKA). The helical transmembrane segment at 24–42 (KFLFGGLAGMGATVFVQPL) threads the bilayer. K57 bears the N6-succinyllysine mark. A helical transmembrane segment spans residues 83 to 101 (GLSAGLLRQATYTTTRLGI). Y102 bears the Phosphotyrosine mark. 3 consecutive transmembrane segments (helical) span residues 119-140 (FLLK…GTPA), 183-202 (GCIP…LASY), and 222-240 (HFCA…SMPV). K256 is modified (N6-acetyllysine). The helical transmembrane segment at 281 to 300 (GFTPYYARLGPHTVLTFIFL) threads the bilayer.

This sequence belongs to the mitochondrial carrier (TC 2.A.29) family. As to quaternary structure, interacts with SMIM26. The N-terminus is blocked. In terms of tissue distribution, heart, liver and brain.

The protein resides in the mitochondrion inner membrane. It catalyses the reaction (S)-malate(in) + 2-oxoglutarate(out) = (S)-malate(out) + 2-oxoglutarate(in). The catalysed reaction is malonate(in) + 2-oxoglutarate(out) = malonate(out) + 2-oxoglutarate(in). It carries out the reaction succinate(in) + 2-oxoglutarate(out) = succinate(out) + 2-oxoglutarate(in). The enzyme catalyses maleate(in) + 2-oxoglutarate(out) = maleate(out) + 2-oxoglutarate(in). It catalyses the reaction oxaloacetate(in) + 2-oxoglutarate(out) = oxaloacetate(out) + 2-oxoglutarate(in). Catalyzes the transport of 2-oxoglutarate (alpha-oxoglutarate) across the inner mitochondrial membrane in an electroneutral exchange for malate. Can also exchange 2-oxoglutarate for other dicarboxylic acids such as malonate, succinate, maleate and oxaloacetate, although with lower affinity. Contributes to several metabolic processes, including the malate-aspartate shuttle, the oxoglutarate/isocitrate shuttle, in gluconeogenesis from lactate, and in nitrogen metabolism. Maintains mitochondrial fusion and fission events, and the organization and morphology of cristae. Involved in the regulation of apoptosis. Helps protect from cytotoxic-induced apoptosis by modulating glutathione levels in mitochondria. This chain is Mitochondrial 2-oxoglutarate/malate carrier protein (SLC25A11), found in Bos taurus (Bovine).